The following is an 83-amino-acid chain: U5-theraphotoxin-Hs1a 6 (83 aa).

An N-terminal signal peptide occupies residues 1–21 (MKTSMFLTLTGLVLLFVVCYA). Residues 22-49 (SESEEKEFPKELLSSIFAADSDFKVEER) constitute a propeptide that is removed on maturation. Cystine bridges form between Cys51–Cys63, Cys56–Cys68, and Cys62–Cys75.

It belongs to the neurotoxin 10 (Hwtx-1) family. 51 (Hntx-8) subfamily. Hntx-8 sub-subfamily. Expressed by the venom gland.

It localises to the secreted. Its function is as follows. Agglutinates erythrocytes. In Cyriopagopus schmidti (Chinese bird spider), this protein is U5-theraphotoxin-Hs1a 6.